Here is a 731-residue protein sequence, read N- to C-terminus: 1,4-alpha-glucan branching enzyme GlgB (731 aa).

Catalysis depends on aspartate 412, which acts as the Nucleophile. Glutamate 465 acts as the Proton donor in catalysis.

It belongs to the glycosyl hydrolase 13 family. GlgB subfamily. As to quaternary structure, monomer.

It carries out the reaction Transfers a segment of a (1-&gt;4)-alpha-D-glucan chain to a primary hydroxy group in a similar glucan chain.. It participates in glycan biosynthesis; glycogen biosynthesis. In terms of biological role, catalyzes the formation of the alpha-1,6-glucosidic linkages in glycogen by scission of a 1,4-alpha-linked oligosaccharide from growing alpha-1,4-glucan chains and the subsequent attachment of the oligosaccharide to the alpha-1,6 position. This is 1,4-alpha-glucan branching enzyme GlgB from Bordetella parapertussis (strain 12822 / ATCC BAA-587 / NCTC 13253).